The following is a 236-amino-acid chain: MQVSVFHTPELVPEGTPDCAVAVDVLRATSTIATALANGATAVQVYADLEALGAAAAGYPREDILRGGERGGKQVEGFDFGNSPLYCTSERVAGKRIFMSTTNGTRTLERIRHAPVVLTAALVNVGFVARYIRSQAFETVWVVGSGWQGNFSLEDTVCAGALVEQLGGAANDEAVAAAALFDTWEGDLIELLERASHGQRLLKLGLLDDIVYCAALDTVSALPRQTAAGVLVQGMA.

It belongs to the ComB family. The cofactor is Mg(2+).

It carries out the reaction (2R)-O-phospho-3-sulfolactate + H2O = (2R)-3-sulfolactate + phosphate. This chain is Probable 2-phosphosulfolactate phosphatase, found in Gloeobacter violaceus (strain ATCC 29082 / PCC 7421).